The sequence spans 181 residues: Adenine phosphoribosyltransferase (181 aa).

The protein belongs to the purine/pyrimidine phosphoribosyltransferase family. As to quaternary structure, homodimer.

The protein resides in the cytoplasm. It carries out the reaction AMP + diphosphate = 5-phospho-alpha-D-ribose 1-diphosphate + adenine. It participates in purine metabolism; AMP biosynthesis via salvage pathway; AMP from adenine: step 1/1. In terms of biological role, catalyzes a salvage reaction resulting in the formation of AMP, that is energically less costly than de novo synthesis. This Vibrio cholerae serotype O1 (strain ATCC 39541 / Classical Ogawa 395 / O395) protein is Adenine phosphoribosyltransferase.